The primary structure comprises 43 residues: METATLVAISISRLLVSFTGYALYTAFGQPSEQLRDPFEEHED.

The helical transmembrane segment at 5–27 threads the bilayer; it reads TLVAISISRLLVSFTGYALYTAF.

Belongs to the PsbN family.

Its subcellular location is the plastid. It localises to the chloroplast thylakoid membrane. In terms of biological role, may play a role in photosystem I and II biogenesis. The sequence is that of Protein PsbN from Cycas taitungensis (Prince sago).